A 507-amino-acid chain; its full sequence is ATP synthase subunit alpha, chloroplastic (507 aa).

170–177 (GDRQTGKT) contributes to the ATP binding site.

The protein belongs to the ATPase alpha/beta chains family. F-type ATPases have 2 components, CF(1) - the catalytic core - and CF(0) - the membrane proton channel. CF(1) has five subunits: alpha(3), beta(3), gamma(1), delta(1), epsilon(1). CF(0) has four main subunits: a, b, b' and c.

The protein localises to the plastid. It is found in the chloroplast thylakoid membrane. It carries out the reaction ATP + H2O + 4 H(+)(in) = ADP + phosphate + 5 H(+)(out). In terms of biological role, produces ATP from ADP in the presence of a proton gradient across the membrane. The alpha chain is a regulatory subunit. The polypeptide is ATP synthase subunit alpha, chloroplastic (Physcomitrium patens (Spreading-leaved earth moss)).